An 864-amino-acid polypeptide reads, in one-letter code: Seed linoleate 9S-lipoxygenase-2 (864 aa).

The 126-residue stretch at 46-171 (SGINIIGSTL…LYKSPRIFFA (126 aa)) folds into the PLAT domain. Residues 174–864 (SYLPSETPSP…FRGIPNSISI (691 aa)) enclose the Lipoxygenase domain. The interval 230-264 (PILGGSSTHPYPRRGRTGRYPTRKDPNSEKPATET) is disordered. Residues 251-264 (TRKDPNSEKPATET) are compositionally biased toward basic and acidic residues. 5 residues coordinate Fe cation: H524, H529, H716, N720, and I864.

This sequence belongs to the lipoxygenase family. The cofactor is Fe cation.

Its subcellular location is the cytoplasm. It catalyses the reaction (9Z,12Z)-octadecadienoate + O2 = (9S)-hydroperoxy-(10E,12Z)-octadecadienoate. It functions in the pathway lipid metabolism; oxylipin biosynthesis. Functionally, plant lipoxygenase may be involved in a number of diverse aspects of plant physiology including growth and development, pest resistance, and senescence or responses to wounding. It catalyzes the hydroperoxidation of lipids containing a cis,cis-1,4-pentadiene structure. This is Seed linoleate 9S-lipoxygenase-2 (LOX1.2) from Pisum sativum (Garden pea).